The primary structure comprises 358 residues: D-alanine--D-alanine ligase (358 aa).

An ATP-grasp domain is found at 136–341 (KYILQAAGVP…YGDLIEELIQ (206 aa)). 169 to 224 (EGSLLYPMFVKPANMGSSVGISKAENREELQNALALAYQYDSRAIVEQGIEAREIE) serves as a coordination point for ATP. 3 residues coordinate Mg(2+): Asp295, Glu308, and Asn310.

It belongs to the D-alanine--D-alanine ligase family. Mg(2+) serves as cofactor. Mn(2+) is required as a cofactor.

It is found in the cytoplasm. It carries out the reaction 2 D-alanine + ATP = D-alanyl-D-alanine + ADP + phosphate + H(+). It functions in the pathway cell wall biogenesis; peptidoglycan biosynthesis. Its function is as follows. Cell wall formation. The protein is D-alanine--D-alanine ligase of Enterococcus hirae (strain ATCC 9790 / DSM 20160 / JCM 8729 / LMG 6399 / NBRC 3181 / NCIMB 6459 / NCDO 1258 / NCTC 12367 / WDCM 00089 / R).